The sequence spans 124 residues: MRHYEIVFIVHPDQSEQVPAMIERYKTTITSHGGQIHRIEDWGRRQLAYMIEKLAKAHYVCMNIECDQATLDELEHAFKFNDAVLRHLIVKMKKAETGPSPMMKEVQREEAKKAAAAQPTEAQA.

The disordered stretch occupies residues 97 to 124 (TGPSPMMKEVQREEAKKAAAAQPTEAQA). Low complexity predominate over residues 114–124 (AAAAQPTEAQA).

It belongs to the bacterial ribosomal protein bS6 family.

In terms of biological role, binds together with bS18 to 16S ribosomal RNA. The protein is Small ribosomal subunit protein bS6 of Paraburkholderia phymatum (strain DSM 17167 / CIP 108236 / LMG 21445 / STM815) (Burkholderia phymatum).